The following is a 472-amino-acid chain: Trigger factor (472 aa).

The PPIase FKBP-type domain occupies 174–261 (GDIAVLGFKG…LKDLKTRELP (88 aa)). A disordered region spans residues 430-472 (ENSTLTEQAPAADDADDAEKPAAKKKPAAKKKTPAKSKTDAEA). The span at 452–464 (AKKKPAAKKKTPA) shows a compositional bias: basic residues.

Belongs to the FKBP-type PPIase family. Tig subfamily.

The protein localises to the cytoplasm. The enzyme catalyses [protein]-peptidylproline (omega=180) = [protein]-peptidylproline (omega=0). In terms of biological role, involved in protein export. Acts as a chaperone by maintaining the newly synthesized protein in an open conformation. Functions as a peptidyl-prolyl cis-trans isomerase. This is Trigger factor from Parasynechococcus marenigrum (strain WH8102).